The chain runs to 342 residues: UDP-3-O-(3-hydroxymyristoyl)glucosamine N-acyltransferase (342 aa).

The Proton acceptor role is filled by His239.

The protein belongs to the transferase hexapeptide repeat family. LpxD subfamily. Homotrimer.

The enzyme catalyses a UDP-3-O-[(3R)-3-hydroxyacyl]-alpha-D-glucosamine + a (3R)-hydroxyacyl-[ACP] = a UDP-2-N,3-O-bis[(3R)-3-hydroxyacyl]-alpha-D-glucosamine + holo-[ACP] + H(+). The catalysed reaction is UDP-3-O-[(3R)-3-hydroxytetradecanoyl]-alpha-D-glucosamine + (3R)-hydroxytetradecanoyl-[ACP] = UDP-2-N,3-O-bis[(3R)-3-hydroxytetradecanoyl]-alpha-D-glucosamine + holo-[ACP] + H(+). Its pathway is glycolipid biosynthesis; lipid IV(A) biosynthesis; lipid IV(A) from (3R)-3-hydroxytetradecanoyl-[acyl-carrier-protein] and UDP-N-acetyl-alpha-D-glucosamine: step 3/6. Functionally, catalyzes the N-acylation of UDP-3-O-(hydroxytetradecanoyl)glucosamine using 3-hydroxytetradecanoyl-ACP as the acyl donor. Is involved in the biosynthesis of lipid A, a phosphorylated glycolipid that anchors the lipopolysaccharide to the outer membrane of the cell. In Photorhabdus laumondii subsp. laumondii (strain DSM 15139 / CIP 105565 / TT01) (Photorhabdus luminescens subsp. laumondii), this protein is UDP-3-O-(3-hydroxymyristoyl)glucosamine N-acyltransferase.